We begin with the raw amino-acid sequence, 391 residues long: 3-ketoacyl-CoA thiolase (391 aa).

Cys95 acts as the Acyl-thioester intermediate in catalysis. Active-site proton acceptor residues include His347 and Cys377.

This sequence belongs to the thiolase-like superfamily. Thiolase family. Heterotetramer of two alpha chains (FadB) and two beta chains (FadA).

It localises to the cytoplasm. The enzyme catalyses an acyl-CoA + acetyl-CoA = a 3-oxoacyl-CoA + CoA. The protein operates within lipid metabolism; fatty acid beta-oxidation. Its function is as follows. Catalyzes the final step of fatty acid oxidation in which acetyl-CoA is released and the CoA ester of a fatty acid two carbons shorter is formed. The chain is 3-ketoacyl-CoA thiolase from Ectopseudomonas mendocina (strain ymp) (Pseudomonas mendocina).